The chain runs to 433 residues: UDP-N-acetylglucosamine 1-carboxyvinyltransferase (433 aa).

22–23 (KN) contributes to the phosphoenolpyruvate binding site. Residue R96 coordinates UDP-N-acetyl-alpha-D-glucosamine. C120 (proton donor) is an active-site residue. At C120 the chain carries 2-(S-cysteinyl)pyruvic acid O-phosphothioketal. UDP-N-acetyl-alpha-D-glucosamine-binding positions include 125–129 (RPIDL), D308, and I330.

This sequence belongs to the EPSP synthase family. MurA subfamily.

The protein resides in the cytoplasm. The catalysed reaction is phosphoenolpyruvate + UDP-N-acetyl-alpha-D-glucosamine = UDP-N-acetyl-3-O-(1-carboxyvinyl)-alpha-D-glucosamine + phosphate. It participates in cell wall biogenesis; peptidoglycan biosynthesis. In terms of biological role, cell wall formation. Adds enolpyruvyl to UDP-N-acetylglucosamine. The polypeptide is UDP-N-acetylglucosamine 1-carboxyvinyltransferase (Koribacter versatilis (strain Ellin345)).